The sequence spans 62 residues: Glucagon (62 aa).

The protein belongs to the glucagon family.

The protein resides in the secreted. Its function is as follows. Promotes hydrolysis of glycogen and lipids, and raises the blood sugar level. This chain is Glucagon (gcg), found in Scyliorhinus canicula (Small-spotted catshark).